We begin with the raw amino-acid sequence, 653 residues long: Sodium-dependent phosphate transporter 2 (653 aa).

The Extracellular portion of the chain corresponds to 1 to 5 (MAIDG). A helical transmembrane segment spans residues 6-26 (YLWMVILGFIIAFILAFSVGA). At 27–46 (NDVANSFGTAVGSGVVTLRQ) the chain is on the cytoplasmic side. The helical transmembrane segment at 47 to 67 (ACILASIFETTGSVLLGAKVG) threads the bilayer. At 68–86 (ETIRKGIIDVNLYNETVET) the chain is on the extracellular side. The N-linked (GlcNAc...) asparagine glycan is linked to N81. The chain crosses the membrane as a helical span at residues 87 to 107 (LMAGEVSAMVGSAVWQLIASF). The Cytoplasmic segment spans residues 108-109 (LR). Residues 110 to 130 (LPISGTHCIVGSTIGFSLVAI) form a helical membrane-spanning segment. Residues 131–142 (GTQGVQWMELVK) are Extracellular-facing. The helical transmembrane segment at 143–163 (IVASWFISPLLSGFMSGVLFI) threads the bilayer. Residues 164–190 (LIRIFILKKEDPVPNGLRALPVFYAAT) are Cytoplasmic-facing. Residues 191–211 (IAINVFSIMYTGAPVLGLVLP) traverse the membrane as a helical segment. The Extracellular portion of the chain corresponds to 212–213 (IW). The helical transmembrane segment at 214–234 (AIALISFGVALLFALFVWLFV) threads the bilayer. Topologically, residues 235–483 (CPWMRRKIAG…EEKEEKDTAE (249 aa)) are cytoplasmic. Phosphoserine occurs at positions 253, 256, 259, and 268. The tract at residues 275–311 (PGAKANDDSTVPLTGSAGEPSGTSEGTSVGNHPRASY) is disordered. Residues 295 to 304 (SGTSEGTSVG) show a composition bias toward polar residues. A phosphoserine mark is found at S316 and S385. The interval 459-478 (SELTDPDQPRDDPAEEEKEE) is disordered. A helical membrane pass occupies residues 484-504 (VHLLFHFLQVLTACFGSFAHG). At 505 to 531 (GNDVSNAIGPLVALWLIYEQGAVLQEA) the chain is on the extracellular side. The chain crosses the membrane as a helical span at residues 532–552 (VTPVWLLFYGGVGICTGLWVW). At 553–572 (GRRVIQTMGKDLTPITPSSG) the chain is on the cytoplasmic side. A helical transmembrane segment spans residues 573-587 (FTIELASAFTVVIAS). At 588–594 (NVGLPVS) the chain is on the extracellular side. Residues 595 to 610 (TTHCKVGSVVAVGWIR) form a helical membrane-spanning segment. Residues 611–622 (SRKAVDWRLFRN) are Cytoplasmic-facing. The helical transmembrane segment at 623 to 643 (IFVAWFVTVPVAGLFSAAIMA) threads the bilayer. The Extracellular segment spans residues 644-653 (LLMYGILPYV).

It belongs to the inorganic phosphate transporter (PiT) (TC 2.A.20) family. As to quaternary structure, homodimer.

The protein localises to the cell membrane. It is found in the apical cell membrane. It carries out the reaction 2 Na(+)(out) + phosphate(out) = 2 Na(+)(in) + phosphate(in). Sodium-phosphate symporter which preferentially transports the monovalent form of phosphate with a stoichiometry of two sodium ions per phosphate ion. Plays a critical role in the determination of bone quality and strength by providing phosphate for bone mineralization. Required to maintain normal cerebrospinal fluid phosphate levels. Mediates phosphate-induced calcification of vascular smooth muscle cells (VCMCs) and can functionally compensate for loss of SLC20A1 in VCMCs. Functionally, (Microbial infection) Functions as a retroviral receptor for feline leukemia virus subgroup B (FeLV-B). In Felis catus (Cat), this protein is Sodium-dependent phosphate transporter 2 (SLC20A2).